Here is a 550-residue protein sequence, read N- to C-terminus: Atherin (550 aa).

The segment covering 1-11 has biased composition (pro residues); that stretch reads MAGPPALPPPE. Disordered stretches follow at residues 1–32 and 93–468; these read MAGPPALPPPETAAAATTAAAAASSSAASPHY and SYRN…KEKP. Residues 12–30 show a composition bias toward low complexity; sequence TAAAATTAAAAASSSAASP. Positions 24 to 100 constitute an SAMD1-like winged helix (WH) domain; it reads SSSAASPHYQ…SISYRNAARV (77 aa). Residue threonine 108 is modified to Phosphothreonine. The span at 125 to 138 shows a compositional bias: pro residues; that stretch reads APPPTPAPPPPPAP. Over residues 139–160 the composition is skewed to low complexity; it reads VAAAAAPARAPRAAAAAAAATA. Serine 163 carries the post-translational modification Phosphoserine. Low complexity predominate over residues 170-179; the sequence is GPRAQRAAPL. Pro residues-rich tracts occupy residues 180-205 and 214-245; these read AAPPPAPAAPPAAAPPAGPRRAPPPA and PLPPPPQPPAPPQQQQQPPPPPPPQQPQPPPE. Residues 246-257 are compositionally biased toward low complexity; it reads GGAARAGGPARP. Serine 270 carries the phosphoserine modification. A compositionally biased stretch (basic and acidic residues) spans 290–300; the sequence is AAARGRLERTR. The span at 337–355 shows a compositional bias: acidic residues; it reads KEEEEEEEEDDEDDDDDVV. The span at 437-448 shows a compositional bias: pro residues; the sequence is SPSPVPLPPGKP. Residues 474–542 form the SAM domain; the sequence is WTVMDVVEYF…KVLQQGHFED (69 aa).

Homopolymerize into a closed pentameric ring. Interacts (via SAM domain) with L3MBTL3 (via SAM domain); the interaction mediates L3MBTL3 binding to chromatin. Interacts (via WH domain) with KDM1A; the interaction modulates KDM1A function.

Its subcellular location is the nucleus. The protein localises to the chromosome. It is found in the secreted. Its function is as follows. Unmethylated CpG islands (CGIs)-binding protein which localizes to H3K4me3-decorated CGIs, where it acts as a transcriptional repressor. Tethers L3MBTL3 to chromatin and interacts with the KDM1A histone demethylase complex to modulate H3K4me2 and H3K4me3 levels at CGIs. Plays a role in atherogenesis by binding with LDL on cell surface and promoting LDL oxidation which leads to the formation of foam cell. This Oryctolagus cuniculus (Rabbit) protein is Atherin (SAMD1).